A 110-amino-acid polypeptide reads, in one-letter code: Small ribosomal subunit protein uS10m (110 aa).

The protein belongs to the universal ribosomal protein uS10 family.

The protein resides in the mitochondrion. The chain is Small ribosomal subunit protein uS10m (RPS10) from Pisum sativum (Garden pea).